Here is a 258-residue protein sequence, read N- to C-terminus: (S)-hydroxynitrile lyase (258 aa).

In terms of domain architecture, AB hydrolase-1 spans 5-242 (HFVLIHTICH…GGDHKLQLTK (238 aa)). The 2-hydroxy-2-methylpropanenitrile site is built by T11 and S80. 3 residues coordinate acetone: T11, S80, and C81. S80 acts as the Proton donor/acceptor in catalysis. Catalysis depends on H236, which acts as the Proton donor/acceptor.

Belongs to the AB hydrolase superfamily. Hydroxynitrile lyase family. Homotetramer.

It carries out the reaction a monosubstituted aliphatic (S)-hydroxynitrile = an aldehyde + hydrogen cyanide. The enzyme catalyses a disubstituted aliphatic (S)-hydroxynitrile = a ketone + hydrogen cyanide. The catalysed reaction is an aromatic (S)-hydroxynitrile = an aromatic aldehyde + hydrogen cyanide. It catalyses the reaction 2-hydroxy-2-methylpropanenitrile = acetone + hydrogen cyanide. It carries out the reaction butan-2-one + hydrogen cyanide = 2-hydroxy-2-methylbutanenitrile. The enzyme catalyses pentan-2-one + hydrogen cyanide = (2S)-2-hydroxy-2-methylpentanenitrile. The catalysed reaction is hexan-2-one + hydrogen cyanide = (2S)-2-hydroxy-2-methylhexanenitrile. It catalyses the reaction heptan-2-one + hydrogen cyanide = (2S)-2-hydroxy-2-methylheptanenitrile. It carries out the reaction 4-methylpentan-2-one + hydrogen cyanide = (2S)-2-hydroxy-2,4-dimethylpentanenitrile. The enzyme catalyses 3,3-dimethylbutan-2-one + hydrogen cyanide = (2S)-2-hydroxy-2-methyl-3,3-dimethylbutanenitrile. The catalysed reaction is acetophenone + hydrogen cyanide = (2S)-2-hydroxy-2-phenylpropanenitrile. It catalyses the reaction propanal + hydrogen cyanide = (2S)-2-hydroxybutanenitrile. It carries out the reaction pentanal + hydrogen cyanide = (2S)-2-hydroxyhexanenitrile. The enzyme catalyses 2-methylpropanal + hydrogen cyanide = (2S)-2-hydroxy-3-methylbutanenitrile. The catalysed reaction is 2,2-dimethylpropanal + hydrogen cyanide = (2S)-2-hydroxy-3,3-dimethylbutanenitrile. It catalyses the reaction acrolein + hydrogen cyanide = (2S)-2-hydroxybut-3-enenitrile. It carries out the reaction (2E)-but-2-enal + hydrogen cyanide = (2S,3E)-2-hydroxypent-3-enenitrile. The enzyme catalyses (E)-hex-2-enal + hydrogen cyanide = (2S,3E)-2-hydroxyhept-3-enenitrile. The catalysed reaction is cyclohexanecarbaldehyde + hydrogen cyanide = (2S)-2-cyclohexyl-2-hydroxyacetonitrile. It catalyses the reaction benzaldehyde + hydrogen cyanide = (S)-mandelonitrile. It carries out the reaction 4-methoxybenzaldehyde + hydrogen cyanide = (2S)-2-hydroxy-2-(4-methoxyphenyl)acetonitrile. The enzyme catalyses piperonal + hydrogen cyanide = (2S)-2-(2H-1,3-benzodioxol-5-yl)-2-hydroxyacetonitrile. The catalysed reaction is formylthiophene + hydrogen cyanide = (2R)-2-hydroxy-2-(thiophen-2-yl)acetonitrile. It catalyses the reaction 3-formylthiophene + hydrogen cyanide = (2S)-2-hydroxy-2-(thiophen-3-yl)acetonitrile. It carries out the reaction furan-3-carbaldehyde + hydrogen cyanide = (2S)-2-(furan-3-yl)-2-hydroxyacetonitrile. In terms of biological role, involved in cyanogenesis, the release of HCN from cyanogenic glycosides in injured tissues; the release of toxic HCN is believed to play a central role in the defense mechanism of plants against herbivores and microbial attack. Decomposes a variety of cyanohydrins (alpha-hydroxynitriles) into HCN and the corresponding aldehydes or ketones; two natural substrates are 2-hydroxy-2-methylpropanenitrile (acetone cyanohydrin) and 2-hydroxy-2-methylbutanenitrile (2-butanone cyanohydrin), but in vitro can also act on 2-hydroxy-2-methylpentanenitrile (2-pentanone cyanohydrin) and mandelonitrile. Is also able to catalyze the reverse reaction in vitro, leading to the stereospecific synthesis of aliphatic, aromatic, and heterocyclic cyanohydrins, important intermediates in the production of various agrochemicals or pharmaceuticals. This chain is (S)-hydroxynitrile lyase, found in Manihot esculenta (Cassava).